Here is an 832-residue protein sequence, read N- to C-terminus: MPLSYQHFRKLLLLDDEAGPLEEELPRLADEGLNHRVAEDLNLQLPNVSIPWTHKVGNFTGLYSSTLPIFNPNWQTPSFPDIHLHQDIINKCEQFVGPLTVNERRRLKLVMPARFYPTSTKYLPLEKGIKPYYPQDVVNHYFQTRHYLHTLWEAGILYKRETTRSASFCGSPYSWEQELQHGAESFNQQSTRIFSRAPVGPCIQSKHQQSRLGLQPQQGQLAKGQRGRSGSVRSRAHSATRRSVGVEPSGSGHNNNSASESASCLHQSAVRQEAYSHFSTSERHSSSGHALELHDISPSSARSQSKGSVFSCWWLQFRNSIPCSGHCLSHLVNLLEDWGPCTEHGKHHIRIPRTPARVTGGVFLVDKNPHNTAESRLVVDFSQFSRGSTRVPWPKFAVPNLQSLTNLLSSNLSWLSLDVSAAFYHLPLHPAAMPHLLVGSSGLSRYVARLSSNSRIHDHQHGTMQNLHNYCTRNLFVSLMLLYKTFGRKLHLYSHPIVLGFRKIPMGVGLSPFLLAQFTSAICSVVRRAFPHCLAFSYMDDVVLGAKSVQHLESLYTAVTNFLLSLGIHLNPTKTKRWGYSLNFMGYVIGSWGTLPQEHIVQKIKHCFRKIPVNRPIDWKVCQRIVGLLGFAAPFTQCGYPALMPLYACIQAKQAFTFSPIYKAFLSKQYATLYPVARQRAGLCQVFADATPTGWGLVIGQQRMRGTFVAPLPIHTAELLAACFARSRSGANIIGTDNSVVLSRKYTSFPWLLGCAANWILRGTSFVYVPSALNPADDPSRGRLGLSRPLCRLPFQPTTGRTSLYAVSPSVPSHLPDRVHFASPLHVAWRPP.

The interval 1-177 (MPLSYQHFRK…FCGSPYSWEQ (177 aa)) is terminal protein domain (TP). The interval 178–335 (ELQHGAESFN…HCLSHLVNLL (158 aa)) is spacer. Composition is skewed to polar residues over residues 205–220 (SKHQ…QQGQ) and 251–263 (SGHN…ESAS). A disordered region spans residues 205-263 (SKHQQSRLGLQPQQGQLAKGQRGRSGSVRSRAHSATRRSVGVEPSGSGHNNNSASESAS). Residues 336–679 (EDWGPCTEHG…YATLYPVARQ (344 aa)) are polymerase/reverse transcriptase domain (RT). The region spanning 346-589 (KHHIRIPRTP…YSLNFMGYVI (244 aa)) is the Reverse transcriptase domain. 3 residues coordinate Mg(2+): Asp-418, Asp-540, and Asp-541.

Belongs to the hepadnaviridae P protein family.

The catalysed reaction is DNA(n) + a 2'-deoxyribonucleoside 5'-triphosphate = DNA(n+1) + diphosphate. The enzyme catalyses Endonucleolytic cleavage to 5'-phosphomonoester.. Activated by host HSP70 and HSP40 in vitro to be able to bind the epsilon loop of the pgRNA. Because deletion of the RNase H region renders the protein partly chaperone-independent, the chaperones may be needed indirectly to relieve occlusion of the RNA-binding site by this domain. Inhibited by several reverse-transcriptase inhibitors: Lamivudine, Adefovir and Entecavir. In terms of biological role, multifunctional enzyme that converts the viral RNA genome into dsDNA in viral cytoplasmic capsids. This enzyme displays a DNA polymerase activity that can copy either DNA or RNA templates, and a ribonuclease H (RNase H) activity that cleaves the RNA strand of RNA-DNA heteroduplexes in a partially processive 3'- to 5'-endonucleasic mode. Neo-synthesized pregenomic RNA (pgRNA) are encapsidated together with the P protein, and reverse-transcribed inside the nucleocapsid. Initiation of reverse-transcription occurs first by binding the epsilon loop on the pgRNA genome, and is initiated by protein priming, thereby the 5'-end of (-)DNA is covalently linked to P protein. Partial (+)DNA is synthesized from the (-)DNA template and generates the relaxed circular DNA (RC-DNA) genome. After budding and infection, the RC-DNA migrates in the nucleus, and is converted into a plasmid-like covalently closed circular DNA (cccDNA). The activity of P protein does not seem to be necessary for cccDNA generation, and is presumably released from (+)DNA by host nuclear DNA repair machinery. In Gorilla gorilla (western gorilla), this protein is Protein P.